Here is a 412-residue protein sequence, read N- to C-terminus: Polyferredoxin protein MvhB (412 aa).

4Fe-4S ferredoxin-type domains follow at residues 2–29 (IIVN…VTPE), 30–57 (DVIY…LEDL), 67–96 (GRIV…LDEG), 97–127 (KVKK…VEGI), 138–166 (EGPI…LDKV), 168–197 (GVIE…ISGR), 207–236 (KKFE…PRTS), 238–266 (LTVE…LEVE), 276–305 (EGLV…VVTK), 314–345 (EKVD…LVDM), 357–386 (KRVQ…LTDE), and 385–412 (DEKV…LSLK). [4Fe-4S] cluster-binding residues include C9, C12, C15, and C19. [4Fe-4S] cluster-binding residues include C76, C79, C82, C86, C107, C110, C113, C117, C146, C149, C152, C156, C177, C180, C183, C187, C216, C219, C222, C226, C246, C249, C252, and C256. [4Fe-4S] cluster is bound by residues C325, C328, C331, C335, C366, C369, C372, C376, C394, C397, C400, and C404.

It depends on [4Fe-4S] cluster as a cofactor.

This Methanothermobacter thermautotrophicus (strain ATCC 29096 / DSM 1053 / JCM 10044 / NBRC 100330 / Delta H) (Methanobacterium thermoautotrophicum) protein is Polyferredoxin protein MvhB (mvhB).